A 216-amino-acid chain; its full sequence is 2',3'-cyclic-nucleotide 3'-phosphodiesterase (216 aa).

The Proton donor/acceptor role is filled by His-39. Thr-41 serves as a coordination point for substrate. His-137 serves as the catalytic Proton donor/acceptor. Substrate is bound by residues Ser-139 and Tyr-142.

Belongs to the 2H phosphoesterase superfamily. CPD1 family.

The protein resides in the golgi apparatus. It carries out the reaction a nucleoside 2',3'-cyclic phosphate + H2O = a nucleoside 2'-phosphate + H(+). In terms of biological role, involved in the metabolism of ADP-ribose 1',2'-cyclic phosphate which is produced as a consequence of tRNA splicing. This is 2',3'-cyclic-nucleotide 3'-phosphodiesterase (CPD1) from Eremothecium gossypii (strain ATCC 10895 / CBS 109.51 / FGSC 9923 / NRRL Y-1056) (Yeast).